An 857-amino-acid chain; its full sequence is DNA mismatch repair protein MutS (857 aa).

621-628 (GPNMGGKS) is a binding site for ATP.

The protein belongs to the DNA mismatch repair MutS family.

Functionally, this protein is involved in the repair of mismatches in DNA. It is possible that it carries out the mismatch recognition step. This protein has a weak ATPase activity. This chain is DNA mismatch repair protein MutS, found in Francisella tularensis subsp. tularensis (strain SCHU S4 / Schu 4).